The following is a 75-amino-acid chain: Putative membrane protein insertion efficiency factor 2 (75 aa).

This sequence belongs to the UPF0161 family.

It is found in the cell membrane. Its function is as follows. Could be involved in insertion of integral membrane proteins into the membrane. The polypeptide is Putative membrane protein insertion efficiency factor 2 (Bacillus licheniformis (strain ATCC 14580 / DSM 13 / JCM 2505 / CCUG 7422 / NBRC 12200 / NCIMB 9375 / NCTC 10341 / NRRL NRS-1264 / Gibson 46)).